The sequence spans 426 residues: Enolase (426 aa).

Gln162 provides a ligand contact to (2R)-2-phosphoglycerate. Glu204 (proton donor) is an active-site residue. Mg(2+)-binding residues include Asp241, Glu288, and Asp315. The (2R)-2-phosphoglycerate site is built by Lys340, Arg369, Ser370, and Lys391. Lys340 acts as the Proton acceptor in catalysis.

It belongs to the enolase family. Requires Mg(2+) as cofactor.

The protein localises to the cytoplasm. It localises to the secreted. It is found in the cell surface. It carries out the reaction (2R)-2-phosphoglycerate = phosphoenolpyruvate + H2O. It functions in the pathway carbohydrate degradation; glycolysis; pyruvate from D-glyceraldehyde 3-phosphate: step 4/5. Its function is as follows. Catalyzes the reversible conversion of 2-phosphoglycerate (2-PG) into phosphoenolpyruvate (PEP). It is essential for the degradation of carbohydrates via glycolysis. The sequence is that of Enolase from Bacteroides thetaiotaomicron (strain ATCC 29148 / DSM 2079 / JCM 5827 / CCUG 10774 / NCTC 10582 / VPI-5482 / E50).